Consider the following 154-residue polypeptide: MNYHQYYPVDIVNGPGTRCTLFVSGCVHECPGCYNKSTWRVNSGQPFTKAMEDQIINDLNDTRIKRQGISLSGGDPLHPQNVPDILKLVQRIRAECPGKDIWVWTGYKLDELNAAQMQVVDLINVLVDGKFVQDLKDPSLIWRGSSNQVVHHLR.

The [4Fe-4S] cluster site is built by C26, C30, and C33. S-adenosyl-L-methionine contacts are provided by residues 32–34 (GCY) and G74.

It belongs to the organic radical-activating enzymes family. In terms of assembly, forms a tetramer composed of two NrdD and two NrdG subunits. It depends on [4Fe-4S] cluster as a cofactor.

Its subcellular location is the cytoplasm. It carries out the reaction glycyl-[protein] + reduced [flavodoxin] + S-adenosyl-L-methionine = glycin-2-yl radical-[protein] + semiquinone [flavodoxin] + 5'-deoxyadenosine + L-methionine + H(+). Functionally, activation of anaerobic ribonucleoside-triphosphate reductase under anaerobic conditions by generation of an organic free radical, using S-adenosylmethionine and reduced flavodoxin as cosubstrates to produce 5'-deoxy-adenosine. This is Anaerobic ribonucleoside-triphosphate reductase-activating protein (nrdG) from Escherichia coli O157:H7.